Here is a 218-residue protein sequence, read N- to C-terminus: 23 kDa integral membrane protein (218 aa).

At 1–12 (MATLGTGMRCLK) the chain is on the cytoplasmic side. Residues 13–36 (SCVFILNIICLLCSLVLIGAGAYV) traverse the membrane as a helical segment. Residues 37–55 (EVKFSQYEANLHKVWQAAP) are Extracellular-facing. A helical transmembrane segment spans residues 56-71 (IAIIVVGVVILIVSFL). Over 72–82 (GCCGAIKENVC) the chain is Cytoplasmic. The chain crosses the membrane as a helical span at residues 83 to 108 (MLYMYAFFLIVLLIAELVAAIVAVVY). The Extracellular segment spans residues 109 to 183 (KDKIDDEINT…SVFSAFLKRN (75 aa)). A helical transmembrane segment spans residues 184-205 (LIIVACVAFGVCFFQLLSIVIA). Residues 206–218 (CCLGQRIHDYQNV) are Cytoplasmic-facing.

Belongs to the tetraspanin (TM4SF) family.

Its subcellular location is the membrane. This chain is 23 kDa integral membrane protein, found in Schistosoma japonicum (Blood fluke).